Reading from the N-terminus, the 330-residue chain is Ketol-acid reductoisomerase (NADP(+)) (330 aa).

One can recognise a KARI N-terminal Rossmann domain in the interval 2 to 182 (VKVYYDADAN…GCTKAGVFET (181 aa)). Residues 25 to 28 (YGSQ), Arg-48, Ser-51, and 83 to 86 (DEIQ) contribute to the NADP(+) site. His-108 is a catalytic residue. An NADP(+)-binding site is contributed by Gly-134. A KARI C-terminal knotted domain is found at 183 to 328 (SFREETETDL…ARLREMMPWL (146 aa)). Asp-191, Glu-195, Glu-227, and Glu-231 together coordinate Mg(2+). Ser-252 provides a ligand contact to substrate.

Belongs to the ketol-acid reductoisomerase family. Requires Mg(2+) as cofactor.

The catalysed reaction is (2R)-2,3-dihydroxy-3-methylbutanoate + NADP(+) = (2S)-2-acetolactate + NADPH + H(+). It catalyses the reaction (2R,3R)-2,3-dihydroxy-3-methylpentanoate + NADP(+) = (S)-2-ethyl-2-hydroxy-3-oxobutanoate + NADPH + H(+). The protein operates within amino-acid biosynthesis; L-isoleucine biosynthesis; L-isoleucine from 2-oxobutanoate: step 2/4. It functions in the pathway amino-acid biosynthesis; L-valine biosynthesis; L-valine from pyruvate: step 2/4. Functionally, involved in the biosynthesis of branched-chain amino acids (BCAA). Catalyzes an alkyl-migration followed by a ketol-acid reduction of (S)-2-acetolactate (S2AL) to yield (R)-2,3-dihydroxy-isovalerate. In the isomerase reaction, S2AL is rearranged via a Mg-dependent methyl migration to produce 3-hydroxy-3-methyl-2-ketobutyrate (HMKB). In the reductase reaction, this 2-ketoacid undergoes a metal-dependent reduction by NADPH to yield (R)-2,3-dihydroxy-isovalerate. This is Ketol-acid reductoisomerase (NADP(+)) from Desulforamulus reducens (strain ATCC BAA-1160 / DSM 100696 / MI-1) (Desulfotomaculum reducens).